The chain runs to 601 residues: MTVHYVHEGPEPQESRYSIPQHTTWMDPNNRRLRVITIGAGFSGILMAYQIQKQCANIEHVVYEKNHDIGGTWLTNRYPNAGCDVPSHAYTYRFALYPDWPRYFSYASDIWEYLDKVCAAFKLRQYMQFRTEVIKACWNEEEGQWKVRLRRQRPGQEPEEFDDHCHILLNACGVLSNPKWPDTPGLHDRFKGRVIHTAAWPDDYGEVQWNSDRVAVIGSGASSIQAVAGIQPHVGHLDIFVRTGVWFGVLAGNTGAPTKIYSEAERAQFRSNPSALVEHTKSIEAEVNGMWGAFYRDSMAQKGASAFFRQRMASIIKDDRLAKGFTPTFGFGCRRITPGDPYMHAIQQANVDVHFTAVASCTEDGIVGADGIERLVDTIVCASGFDNTYRPQFPIIGRRGVDLRDKWKTNPEAYLGLAVPDMPNYITFIGPSWPIQNGSVMAPLHSVSEYAIQFLKKMQNENIRAWAPRQQITDRFNEHVQEWVKHTVWSDQCRSWYKNNETGRVNAIWPGSSLHYQAVIERPRYEDFEISYADANPWAHLGMGWTMLDRAGGKQADVSPHLCLENIDPVWFKSIGGDVDILRKQLEKGHTLPNNASHAEA.

FAD is bound by residues Phe42–Ser43, Glu64, Trp73, Asp84, Tyr90, and Val133.

The protein belongs to the FAD-binding monooxygenase family. FAD serves as cofactor.

It participates in mycotoxin biosynthesis; sterigmatocystin biosynthesis. FAD-binding monooxygenase; part of the gene cluster that mediates the biosynthesis of sterigmatocystin (ST), a polyketide-derived furanocoumarin which is part of the most toxic and carcinogenic compounds among the known mycotoxins. The first step in the biosynthesis of sterigmatocystin is the production of hexanoate by the fatty acid synthase (FAS) units stcJ and stcK. The polyketide backbone is assembled by the non-reducing polyketide synthase stcA by condensation of the starter hexanoyl-CoA and 7 malonyl-CoA extender units followed by cyclization and release of norsolorinic acid. Norsolorinic acid is the first stable intermediate in the biosynthesis of sterigmatocystin and is converted into averantin (AVN) by the ketoreductase stcE which reduces the hexanoate ketone to an alcohol. Averantin is then oxidized into 5'-hydroxyaverantin (HAVN) by the cytochrome P450 monooxygenase stcF. 5'-hydroxyaverantin is further converted to 5'-oxyaverantin (OAVN) by the 5'-hydroxyaverantin dehydrogenase stcG. The next step is the conversion of OAVN into averufin (AVF) which is catalyzed by a yet to be identified enzyme. The cytochrome P450 monooxygenase stcB and the flavin-binding monooxygenase stcW are both required for the conversion of averufin to 1-hydroxyversicolorone. The esterase stcI probably catalyzes the formation of versiconal hemiacetal acetate from 1-hydroxyversicolorone. The oxydoreductase stcN then probably catalyzes the biosynthetic step from versiconal to versicolorin B (VERB). The next step is performed by the versicolorin B desaturase stcL to produce versicolorin A (VERA). The ketoreductase stcU and the cytochrome P450 monooxygenase stcS are involved in the conversion of versicolorin A to demethylsterigmatocystin. The Baeyer-Villiger oxidas stcQ and the reductase stcR might be involved in the biosynthetic step from versicolorin A to demethylsterigmatocystin. The final step in the biosynthesis of sterigmatocystin is the methylation of demethylsterigmatocystin catalyzed by the methyltransferase stcP. This chain is FAD-binding monooxygenase stcW, found in Emericella nidulans (strain FGSC A4 / ATCC 38163 / CBS 112.46 / NRRL 194 / M139) (Aspergillus nidulans).